Consider the following 899-residue polypeptide: Inner tegument protein (899 aa).

The tract at residues 463-899 is interaction with large tegument protein; it reads WNYTWLDATS…SAILDAELSK (437 aa).

Belongs to the herpesviridae inner tegument protein family. As to quaternary structure, interacts (via C-terminus) with the large tegument protein/LTP (via N-terminus).

Its subcellular location is the virion tegument. It is found in the host cytoplasm. It localises to the host nucleus. The protein localises to the host Golgi apparatus. The protein resides in the host trans-Golgi network. Its function is as follows. Plays an essential role in cytoplasmic secondary envelopment during viral egress. Interacts with the capsid via the large tegument protein/LTP and participates in its transport to the host trans-Golgi network (TGN) where secondary envelopment occurs. Modulates tegumentation and capsid accumulation at the viral assembly complex. The protein is Inner tegument protein (63) of Saimiri sciureus (Common squirrel monkey).